Here is a 412-residue protein sequence, read N- to C-terminus: Imidazolonepropionase (412 aa).

H73 and H75 together coordinate Fe(3+). The Zn(2+) site is built by H73 and H75. 4-imidazolone-5-propanoate-binding residues include R82, Y145, and H178. Y145 serves as a coordination point for N-formimidoyl-L-glutamate. H247 contacts Fe(3+). H247 serves as a coordination point for Zn(2+). Residue Q250 participates in 4-imidazolone-5-propanoate binding. Position 322 (D322) interacts with Fe(3+). Residue D322 coordinates Zn(2+). 2 residues coordinate N-formimidoyl-L-glutamate: N324 and G326. Position 327 (S327) interacts with 4-imidazolone-5-propanoate.

Belongs to the metallo-dependent hydrolases superfamily. HutI family. Zn(2+) serves as cofactor. Requires Fe(3+) as cofactor.

Its subcellular location is the cytoplasm. The catalysed reaction is 4-imidazolone-5-propanoate + H2O = N-formimidoyl-L-glutamate. The protein operates within amino-acid degradation; L-histidine degradation into L-glutamate; N-formimidoyl-L-glutamate from L-histidine: step 3/3. Functionally, catalyzes the hydrolytic cleavage of the carbon-nitrogen bond in imidazolone-5-propanoate to yield N-formimidoyl-L-glutamate. It is the third step in the universal histidine degradation pathway. This chain is Imidazolonepropionase, found in Shewanella amazonensis (strain ATCC BAA-1098 / SB2B).